Reading from the N-terminus, the 200-residue chain is Signal peptidase complex catalytic subunit SEC11 (200 aa).

Over 1-15 (MFAELAPYLSNPRQT) the chain is Cytoplasmic. Residues 16–33 (LAQILNFALVLSTAFMGW) form a helical; Signal-anchor for type II membrane protein membrane-spanning segment. The Lumenal portion of the chain corresponds to 34 to 200 (KALSVYTNSS…MGVMVMLQRE (167 aa)). The N-linked (GlcNAc...) asparagine glycan is linked to Asn-41. Active-site charge relay system residues include Ser-53 and His-92. Residues 101–131 (GDGGKKSQRRLEKEADKRSGPGLSSPISHQM) form a disordered region. Residues 103–119 (GGKKSQRRLEKEADKRS) are compositionally biased toward basic and acidic residues. Residue Asp-142 is the Charge relay system of the active site. The tract at residues 186-197 (VLLGIMGVMVML) is C-terminal short (CTS) helix.

The protein belongs to the peptidase S26B family. As to quaternary structure, component of the signal peptidase complex (SPC) composed of a catalytic subunit SEC11 and three accessory subunits SPC1, SPC2 and SPC3. The complex induces a local thinning of the ER membrane which is used to measure the length of the signal peptide (SP) h-region of protein substrates. This ensures the selectivity of the complex towards h-regions shorter than 18-20 amino acids. SPC associates with the translocon complex.

The protein resides in the endoplasmic reticulum membrane. The enzyme catalyses Cleavage of hydrophobic, N-terminal signal or leader sequences from secreted and periplasmic proteins.. Catalytic component of the signal peptidase complex (SPC) which catalyzes the cleavage of N-terminal signal sequences from nascent proteins as they are translocated into the lumen of the endoplasmic reticulum. Specifically cleaves N-terminal signal peptides that contain a hydrophobic alpha-helix (h-region) shorter than 18-20 amino acids. The sequence is that of Signal peptidase complex catalytic subunit SEC11 (SEC11) from Arthroderma gypseum (strain ATCC MYA-4604 / CBS 118893) (Microsporum gypseum).